The following is a 211-amino-acid chain: Protein-L-isoaspartate O-methyltransferase (211 aa).

Ser62 is an active-site residue.

Belongs to the methyltransferase superfamily. L-isoaspartyl/D-aspartyl protein methyltransferase family.

It is found in the cytoplasm. The enzyme catalyses [protein]-L-isoaspartate + S-adenosyl-L-methionine = [protein]-L-isoaspartate alpha-methyl ester + S-adenosyl-L-homocysteine. Its function is as follows. Catalyzes the methyl esterification of L-isoaspartyl residues in peptides and proteins that result from spontaneous decomposition of normal L-aspartyl and L-asparaginyl residues. It plays a role in the repair and/or degradation of damaged proteins. This Shewanella sp. (strain ANA-3) protein is Protein-L-isoaspartate O-methyltransferase.